Consider the following 448-residue polypeptide: Vacuolar amino acid transporter 6 (448 aa).

At 1 to 7 the chain is on the cytoplasmic side; that stretch reads MVASIRS. Residues 8 to 28 traverse the membrane as a helical segment; that stretch reads GVLTLLHTACGAGILAMPYAF. The Vacuolar segment spans residues 29 to 32; it reads KPFG. The helical transmembrane segment at 33–53 threads the bilayer; the sequence is LIPGVIMIVLCGACAMQSLFI. Topologically, residues 54 to 80 are cytoplasmic; the sequence is QARVAKYVPQGRASFSALTRLINPNLG. A helical transmembrane segment spans residues 81-101; it reads IVFDLAIAIKCFGVGVSYMIV. Topologically, residues 102–125 are vacuolar; sequence VGDLMPQIMSVWTRNAWLLNRNVQ. Residues 126 to 146 traverse the membrane as a helical segment; that stretch reads ISLIMLFFVAPLSFLKKLNSL. Topologically, residues 147 to 150 are cytoplasmic; it reads RYAS. The helical transmembrane segment at 151–171 threads the bilayer; sequence MVAISSVAYLCVLVLLHYVAP. Over 172 to 195 the chain is Vacuolar; it reads SDEILRLKGRISYLLPPQSHDLNV. The helical transmembrane segment at 196–216 threads the bilayer; sequence LNTLPIFVFAYTCHHNMFSII. Residues 217 to 229 lie on the Cytoplasmic side of the membrane; that stretch reads NEQRSSRFEHVMK. The helical transmembrane segment at 230-250 threads the bilayer; the sequence is IPLIAISLALILYIAIGCAGY. At 251-267 the chain is on the vacuolar side; it reads LTFGDNIIGNIIMLYPQ. A helical membrane pass occupies residues 268-288; it reads AVSSTIGRIAIVLLVMLAFPL. The Cytoplasmic segment spans residues 289-357; the sequence is QCHPARASIH…PKETPLRGKS (69 aa). Ser344 is subject to Phosphoserine. A helical membrane pass occupies residues 358-378; that stretch reads FIVITCSILVASYLVAISVSS. Residues 379-381 lie on the Vacuolar side of the membrane; that stretch reads LAR. The helical transmembrane segment at 382–402 threads the bilayer; the sequence is VLAIVGATGSTSISFILPGLF. Topologically, residues 403–424 are cytoplasmic; that stretch reads GYKLIGTEHKTAVPLTTKIFKY. The chain crosses the membrane as a helical span at residues 425 to 445; the sequence is TGLLLFIWGLIIMITCLTAAL. Residues 446 to 448 lie on the Vacuolar side of the membrane; that stretch reads KLN.

The protein belongs to the amino acid/polyamine transporter 2 family.

It localises to the vacuole membrane. In terms of biological role, involved in amino acid efflux from the vacuole to the cytoplasm. Capable of transporting aspartate and glutamate. Requires ATP for function. In Saccharomyces cerevisiae (strain ATCC 204508 / S288c) (Baker's yeast), this protein is Vacuolar amino acid transporter 6 (AVT6).